Consider the following 1136-residue polypeptide: MQAMDGEVLLPALYEEEEEEEEEEEEVEEEQVEKGGSLGSLSMGKHRGLSLTETELEELRAQVLQLVAELEETRELAGQHEDDSLELQGLLEDERLASAQQAEVFTKQIQQLQGELQHLREEISLLEHEKESELKEMEQELHLAQAEIQNLRQAAADSATEHESDIASLQDDLCRLQNDLDDMERIRGDYEMEIASLRAEMELKTSEPSNLSISDFSGIQDELHHLRERYNLLNEEYQALRESNSSLTGQLAELESDRTRRATERWLESHLLRSTMSSESQTSELDFPEPDPVMQLLRQQLLGAEEQMQDMQDKCKNLYCELEELQHHRRTSEEEQKRLQRELKCAQNEVLRFQTSHSTQQHEELKSRLCTLQQKYDASQDEHSELLKVQMQLETELQQLRLLRCTPVESQSEKELMCRLQKLQAQHQCSVNEKEQLLEVQHHLHDKLRCHESEVHRLRSMVDCLREKNEKNSGIHLQLQEMKGLYQFSRDELERQKHMYDQLEQDFLLCQQELTELKSSQSLCEENGNCSNKCDALLARLTELQDKFKASQEEIGHLQMEQCELLEDQRRLQEEQGQLQEELHRLTFPQPKCGILQKSQELLSKLQDLCEMQLLYQNMQEQQRKLTQNQECVLKEQLEAHKHLRGFKESHFQEVLANPQDARGPKSSSCENKFKVLMDQLQALQVLYDTSQKQQEVLQREHGRLMEERKRLQAELQLCMEEMQVLQTQSPMIKRSFEYCGKNSGSRAPSTENFHRSYESSIDENEGYQKSYVSSQPSTETFLKSYDSSTSANEAFEKSYCSSSTSVSYKKSYGSVSSGETLHRSYASSSTDEDPAEPEDLEHFEETVAKVLTKLQAVKALYQVSQEEHCQLQQRMHRLLAKQKELTEELQCCEKELRECMESLGKPLPPQSDKCEIKELQTKLRELQLQYQASMDEQGRLLAVQEQLEGQLQCCQEELRQLKENRPSISSEARGKNVNKNMNKNANGVRNKKLSMACSEDLENGFENEKNLEVMLYYKASQRRLDELMKEEKEIEEARKKEREKKAKKDLCKLATNPAADPRAEPEPTEDEEENFEEYREGEDESCEAAEEGNPLKLSESKKPSPAPDPPIFSLPLVGLVVISALLWCWWAETSS.

A disordered region spans residues 1–46 (MQAMDGEVLLPALYEEEEEEEEEEEEVEEEQVEKGGSLGSLSMGKH). The span at 14–31 (YEEEEEEEEEEEEVEEEQ) shows a compositional bias: acidic residues. A Phosphoserine modification is found at serine 50. Coiled coils occupy residues 293 to 631 (VMQL…QNQE) and 681 to 730 (LQAL…QTQS). 4 disordered regions span residues 741-773 (GKNS…KSYV), 814-837 (GSVS…DPAE), 965-990 (NRPS…NGVR), and 1040-1111 (KKER…PDPP). Positions 743 to 752 (NSGSRAPSTE) are enriched in polar residues. Residues 839 to 972 (EDLEHFEETV…KENRPSISSE (134 aa)) are a coiled coil. Residues 976–989 (KNVNKNMNKNANGV) show a composition bias toward low complexity. Residues 1017 to 1057 (YYKASQRRLDELMKEEKEIEEARKKEREKKAKKDLCKLATN) are a coiled coil. The segment covering 1040–1052 (KKEREKKAKKDLC) has biased composition (basic and acidic residues). Positions 1067–1091 (EPTEDEEENFEEYREGEDESCEAAE) are enriched in acidic residues. Residues 1112 to 1132 (IFSLPLVGLVVISALLWCWWA) form a helical membrane-spanning segment.

In terms of tissue distribution, present at high level in testis (at protein level).

It is found in the cytoplasmic vesicle. Its subcellular location is the secretory vesicle. It localises to the acrosome membrane. May play a role in acrosome formation in spermatogenesis and in fertilization. The protein is Coiled-coil domain-containing protein 136 (Ccdc136) of Mus musculus (Mouse).